Here is a 394-residue protein sequence, read N- to C-terminus: Chorismate synthase (394 aa).

Position 62 (Arg62) interacts with NADP(+). FMN-binding positions include 144–146, Gly307, 322–326, and Arg349; these read RAS and KPTPT.

This sequence belongs to the chorismate synthase family. Homotetramer. It depends on FMNH2 as a cofactor.

It carries out the reaction 5-O-(1-carboxyvinyl)-3-phosphoshikimate = chorismate + phosphate. The protein operates within metabolic intermediate biosynthesis; chorismate biosynthesis; chorismate from D-erythrose 4-phosphate and phosphoenolpyruvate: step 7/7. Its function is as follows. Catalyzes the anti-1,4-elimination of the C-3 phosphate and the C-6 proR hydrogen from 5-enolpyruvylshikimate-3-phosphate (EPSP) to yield chorismate, which is the branch point compound that serves as the starting substrate for the three terminal pathways of aromatic amino acid biosynthesis. This reaction introduces a second double bond into the aromatic ring system. This chain is Chorismate synthase, found in Acetivibrio thermocellus (strain ATCC 27405 / DSM 1237 / JCM 9322 / NBRC 103400 / NCIMB 10682 / NRRL B-4536 / VPI 7372) (Clostridium thermocellum).